A 252-amino-acid chain; its full sequence is 5'-nucleotidase SurE (252 aa).

4 residues coordinate a divalent metal cation: aspartate 8, aspartate 9, serine 39, and asparagine 95.

It belongs to the SurE nucleotidase family. A divalent metal cation is required as a cofactor.

Its subcellular location is the cytoplasm. The catalysed reaction is a ribonucleoside 5'-phosphate + H2O = a ribonucleoside + phosphate. Functionally, nucleotidase that shows phosphatase activity on nucleoside 5'-monophosphates. The protein is 5'-nucleotidase SurE of Thermoanaerobacter sp. (strain X514).